The primary structure comprises 1230 residues: Potassium channel subfamily T member 1 (1230 aa).

The tract at residues 1–37 is disordered; sequence MARAKLPRSPSEGKAGPGGAPAGAAAPEEPHGLSPLL. The Cytoplasmic segment spans residues 1 to 93; that stretch reads MARAKLPRSP…LFFIKNQRSS (93 aa). A helical transmembrane segment spans residues 94–126; it reads LRIRLFNFSLKLLTCLLYIVRVLLDDPALGIGC. The Extracellular portion of the chain corresponds to 127-153; that stretch reads WGCPKQNYSFNDSSSEINWAPILWVER. N-linked (GlcNAc...) asparagine glycans are attached at residues Asn-133 and Asn-137. The helical transmembrane segment at 154–178 threads the bilayer; the sequence is KMTLWAIQVIVAIISFLETMLLIYL. Over 179–192 the chain is Cytoplasmic; that stretch reads SYKGNIWEQIFRVS. Residues 193–208 traverse the membrane as a helical segment; it reads FVLEMINTLPFIITIF. Topologically, residues 209–215 are extracellular; it reads WPPLRNL. A helical membrane pass occupies residues 216-233; the sequence is FIPVFLNCWLAKHALENM. Residues 234–246 lie on the Cytoplasmic side of the membrane; that stretch reads INDFHRAILRTQS. Residues 247-274 form a helical membrane-spanning segment; that stretch reads AMFNQVLILFCTLLCLVFTGTCGIQHLE. Over 275 to 281 the chain is Extracellular; that stretch reads RAGENLS. The pore-forming intramembrane region spans 282–302; that stretch reads LLTSFYFCIVTFSTVGYGDVT. K(+) contacts are provided by Val-296 and Gly-297. Residues 303–304 lie on the Extracellular side of the membrane; sequence PK. The chain crosses the membrane as a helical span at residues 305-338; it reads IWPSQLLVVIMICVALVVLPLQFEELVYLWMERQ. The Cytoplasmic segment spans residues 339–1230; it reads KSGGNYSRHR…NPETRDETQL (892 aa). The 137-residue stretch at 352 to 488 folds into the RCK N-terminal 1 domain; the sequence is EKHVVLCVSS…FHVKFADHVV (137 aa). Residues Leu-513, His-516, Ser-538, and Asn-540 each coordinate Na(+). Positions 660–689 are disordered; it reads TEHRPTQSGGGGGGSKLALPTENGSGSRRP. Positions 758 and 759 each coordinate Zn(2+). K(+) contacts are provided by Arg-761 and Lys-764. Residues Arg-761 and Lys-764 each coordinate Na(+). Cys-766 and His-768 together coordinate Zn(2+). K(+)-binding residues include Asn-769, Tyr-771, Tyr-777, and Gly-778. Na(+) is bound at residue Tyr-771. Residue Phe-779 participates in Na(+) binding. The RCK N-terminal 2 domain maps to 781–921; the sequence is NKLIIVSAET…QFRAKDSYSL (141 aa). K(+)-binding residues include Ser-787, Leu-818, Asp-820, Gly-842, and Asp-865. Disordered regions lie at residues 1048–1078 and 1204–1230; these read EVKG…EHPL and SSSQ…ETQL. Positions 1057–1072 are enriched in gly residues; that stretch reads AGTGGSSQGRHTGGGD. The segment covering 1204-1219 has biased composition (low complexity); it reads SSSQSRKSSCSHKLSS.

Belongs to the potassium channel family. Calcium-activated (TC 1.A.1.3) subfamily. KCa4.1/KCNT1 sub-subfamily. Homotetramer; which constitutes the Na(+)-activated K(+) channel. Interacts with KCNT2; these heterodimer channels differ from the homomers in their unitary conductance, kinetic behavior, subcellular localization, and response to activation of protein kinase C. Interacts (via C-terminus) with FMR1; this interaction alters gating properties of KCNT1. Interacts with CRBN via its cytoplasmic C-terminus. In terms of processing, phosphorylated by protein kinase C. Phosphorylation of the C-terminal domain increases channel activity. As to expression, highest expression in liver, brain and spinal cord. Lowest expression in skeletal muscle.

It is found in the cell membrane. The catalysed reaction is K(+)(in) = K(+)(out). With respect to regulation, activated by high intracellular Na(+). In addition to activation by Na(+), is cooperatively activated by intracellular Cl(-) levels. Inhibited by Zn(2+). Activated upon stimulation of G-protein coupled receptors, such as CHRM1 and GRIA1. Functionally, sodium-activated K(+) channel. Acts as an important mediator of neuronal membrane excitability. Contributes to the delayed outward currents. Regulates neuronal bursting in sensory neurons. Contributes to synaptic development and plasticity. The protein is Potassium channel subfamily T member 1 of Homo sapiens (Human).